A 901-amino-acid polypeptide reads, in one-letter code: Desmocollin-2 (901 aa).

The signal sequence occupies residues 1-27 (MEAARPSGSWNGALCRLLLLTLAILIF). Residues 28–135 (ASDACKNVTL…KEKVLRRAKR (108 aa)) constitute a propeptide that is removed on maturation. N34 and N166 each carry an N-linked (GlcNAc...) asparagine glycan. 5 consecutive Cadherin domains span residues 136–243 (RWAP…YPIF), 244–355 (TEET…LPTF), 356–471 (TRTS…GPEC), 472–579 (NPPI…FIPK), and 580–694 (KTVI…QLGK). Residues 136–694 (RWAPIPCSML…IGGGGVQLGK (559 aa)) are Extracellular-facing. An N-linked (GlcNAc...) (complex) asparagine glycan is attached at N392. N546 and N629 each carry an N-linked (GlcNAc...) asparagine glycan. Residues 695–715 (WAILAILLGIALLFCILFTLV) traverse the membrane as a helical segment. Over 716–901 (CGASGTSKQP…RTLAEACMKR (186 aa)) the chain is Cytoplasmic. 3 positions are modified to phosphoserine: S864, S868, and S873.

As to quaternary structure, interacts with DSP, PKP2 and JUP. Interacts with DSG3; the interaction may limit the interaction of DSC3 with p38MAPK family members and therefore repress p38MAPK signaling activation. As to expression, expressed at intercalated disks in the heart, where it is colocalized with CDH2 (at protein level). Expressed in intestinal mucosal cells (at protein level).

The protein localises to the cell membrane. The protein resides in the cell junction. It localises to the desmosome. In terms of biological role, a component of desmosome cell-cell junctions which are required for positive regulation of cellular adhesion. Promotes timely incorporation of DSG2 into desmosome intercellular junctions and promotes interaction of desmosome cell junctions with intermediate filament cytokeratin, via modulation of DSP phosphorylation. Plays an important role in desmosome-mediated maintenance of intestinal epithelial cell intercellular adhesion strength and barrier function. Positively regulates wound healing of intestinal mucosa via promotion of epithelial cell migration, and also plays a role in mechanotransduction of force between intestinal epithelial cells and extracellular matrix. May contribute to epidermal cell positioning (stratification) by mediating differential adhesiveness between cells that express different isoforms. May promote p38MAPK signaling activation that facilitates keratinocyte migration. This chain is Desmocollin-2, found in Homo sapiens (Human).